Consider the following 176-residue polypeptide: MKRSKWRTRFAGAYCDPILRSWLTEPDSLTARCQRASSAFRVRLLRYGKGQALADEAVEGKAGRHSAWVREVVLECDGVPVIFAHTTLSTARRGRMTRWMAGLGSRSLGSLLFAYPGFKRGGIEFLRLDRCHPLYRRAAALGAGRKSLWARRSLHRLGGQQVLVTEVFLPAITLLK.

R70, L108, and E166 together coordinate substrate.

The protein belongs to the UbiC family.

Its subcellular location is the cytoplasm. The enzyme catalyses chorismate = 4-hydroxybenzoate + pyruvate. It functions in the pathway cofactor biosynthesis; ubiquinone biosynthesis. Its function is as follows. Removes the pyruvyl group from chorismate, with concomitant aromatization of the ring, to provide 4-hydroxybenzoate (4HB) for the ubiquinone pathway. The sequence is that of Probable chorismate pyruvate-lyase from Dechloromonas aromatica (strain RCB).